The sequence spans 341 residues: Probable galacturonosyltransferase-like 2 (341 aa).

The Cytoplasmic segment spans residues 1–4 (MHSK). The chain crosses the membrane as a helical; Signal-anchor for type II membrane protein span at residues 5-22 (FILYLSILAVFTVSFAGG). Residues 23–341 (ERFKEAPKFF…LESRFDLIES (319 aa)) are Lumenal-facing. The N-linked (GlcNAc...) asparagine glycan is linked to Asn-190.

It belongs to the glycosyltransferase 8 family.

It localises to the golgi apparatus membrane. The protein operates within glycan metabolism; pectin biosynthesis. Functionally, may be involved in pectin and/or xylans biosynthesis in cell walls. This chain is Probable galacturonosyltransferase-like 2 (GATL2), found in Arabidopsis thaliana (Mouse-ear cress).